A 437-amino-acid polypeptide reads, in one-letter code: Protein farnesyltransferase subunit beta (437 aa).

5 PFTB repeats span residues 123–164, 174–215, 222–263, 270–312, and 332–374; these read ATDV…CIIG, REKL…SLTN, FEGT…VILK, LKSL…PLLH, and QQAL…SIAQ. (2E,6E)-farnesyl diphosphate contacts are provided by residues 248–251 and 291–294; these read HGGY and RCNK. Asp-297 and Cys-299 together coordinate Zn(2+). 300-303 is a (2E,6E)-farnesyl diphosphate binding site; sequence YSFW. A Zn(2+)-binding site is contributed by His-362. Phosphothreonine is present on Thr-436.

Belongs to the protein prenyltransferase subunit beta family. As to quaternary structure, heterodimer of FNTA and FNTB. The cofactor is Zn(2+).

It catalyses the reaction L-cysteinyl-[protein] + (2E,6E)-farnesyl diphosphate = S-(2E,6E)-farnesyl-L-cysteinyl-[protein] + diphosphate. Essential subunit of the farnesyltransferase complex. Catalyzes the transfer of a farnesyl moiety from farnesyl diphosphate to a cysteine at the fourth position from the C-terminus of several proteins having the C-terminal sequence Cys-aliphatic-aliphatic-X. This chain is Protein farnesyltransferase subunit beta (FNTB), found in Bos taurus (Bovine).